We begin with the raw amino-acid sequence, 360 residues long: MNPKMILTGVSKKYTLYRNNTEKLKAMFFPKTREQHRDFYALKDINLEVYEGETIGVIGINGSGKSTISNILASVIPPTEGEMTVNGETSLIAINVGLNKNLNGYENIEQKCLMHGFSKKEIEELMPAIEEFADIGDFIDQPVKSYSSGMKSRLGFAISAHTNPDILIVDEALSVGDKTFYQKCKDKIDEFKAQNKTIVFISHNIKEIKNLSDRVLWLHNGEVREFGDKNEVIKQYEDYINWFNKLSKEEKEAHKQELKEMRSLAPSLYEEQENGKAGSGGDGTQPIVQPKRDKQAVKSAVWFFSQLVVFAVIFLTAAYFLVVPQLTDGSGSEELEQVAVGAEVQAGTSMGDIDNSDVSL.

An ABC transporter domain is found at 24 to 245 (LKAMFFPKTR…YEDYINWFNK (222 aa)). 59–66 (GINGSGKS) contributes to the ATP binding site. The interval 246 to 360 (LSKEEKEAHK…GDIDNSDVSL (115 aa)) is unknown. Residues 270 to 290 (EEQENGKAGSGGDGTQPIVQP) form a disordered region.

This sequence belongs to the ABC transporter superfamily. Teichoic acids exporter (TC 3.A.1.104.1) family. As to quaternary structure, the complex is composed of two ATP-binding proteins (TagH) and two transmembrane proteins (TagG).

The protein localises to the cell membrane. The catalysed reaction is ATP + H2O + teichoic acidSide 1 = ADP + phosphate + teichoic acidSide 2.. In terms of biological role, part of the ABC transporter complex TagGH involved in teichoic acids export. Responsible for energy coupling to the transport system. The polypeptide is Teichoic acids export ATP-binding protein TagH (Shouchella clausii (strain KSM-K16) (Alkalihalobacillus clausii)).